Consider the following 203-residue polypeptide: Small ribosomal subunit protein uS4 (203 aa).

In terms of domain architecture, S4 RNA-binding spans 93-156 (QRLDNVVYRL…MKVPAILEAV (64 aa)).

Belongs to the universal ribosomal protein uS4 family. Part of the 30S ribosomal subunit. Contacts protein S5. The interaction surface between S4 and S5 is involved in control of translational fidelity.

Functionally, one of the primary rRNA binding proteins, it binds directly to 16S rRNA where it nucleates assembly of the body of the 30S subunit. In terms of biological role, with S5 and S12 plays an important role in translational accuracy. In Lactococcus lactis subsp. cremoris (strain MG1363), this protein is Small ribosomal subunit protein uS4.